We begin with the raw amino-acid sequence, 58 residues long: Preprotein translocase subunit SecG (58 aa).

The Cytoplasmic segment spans residues 1–32; the sequence is MARKRRKGGEGLVTAIGLVRFYEEVEEKIKVP. Residues 33-54 form a helical membrane-spanning segment; that stretch reads PEAVIGAAFALSIMTIALDLLL. At 55–58 the chain is on the extracellular side; sequence KAAR.

It belongs to the SEC61-beta family. Component of the protein translocase complex. Heterotrimer consisting of alpha (SecY), beta (SecG) and gamma (SecE) subunits. Can form oligomers of the heterotrimer.

Its subcellular location is the cell membrane. Involved in protein export. The function of the beta subunit is unknown, but it may be involved in stabilization of the trimeric complex. The sequence is that of Preprotein translocase subunit SecG from Ignicoccus hospitalis (strain KIN4/I / DSM 18386 / JCM 14125).